A 321-amino-acid polypeptide reads, in one-letter code: Sideroflexin-3 (321 aa).

M1 carries the post-translational modification N-acetylmethionine. The next 4 membrane-spanning stretches (helical) occupy residues 146–164 (LGTAYVSATTGAVATALGL), 174–194 (LVGRFVPFAAVAAANCINIPL), 225–245 (IFQVVISRIGMAIPAMAIPPV), and 266–286 (LQVGLVGFCLVFATPLCCALF).

Belongs to the sideroflexin family. As to expression, widely expressed.

Its subcellular location is the mitochondrion membrane. It carries out the reaction L-serine(in) = L-serine(out). Mitochondrial serine transporter that mediates transport of serine into mitochondria, an important step of the one-carbon metabolism pathway. Mitochondrial serine is converted to glycine and formate, which then exits to the cytosol where it is used to generate the charged folates that serve as one-carbon donors. This Mus musculus (Mouse) protein is Sideroflexin-3.